A 434-amino-acid chain; its full sequence is DNA primase DnaG (434 aa).

Residues 171-250 (DAIIIVEGRA…AFSPRRRSVE (80 aa)) form the Toprim domain. Residues Glu-177, Asp-219, and Asp-221 each contribute to the Mg(2+) site. The disordered stretch occupies residues 290–319 (GEEEHSSVSQKEEGNNTTPDVPADLPEEPP). Basic and acidic residues predominate over residues 292–303 (EEHSSVSQKEEG).

This sequence belongs to the archaeal DnaG primase family. In terms of assembly, forms a ternary complex with MCM helicase and DNA. The cofactor is Mg(2+).

It carries out the reaction ssDNA + n NTP = ssDNA/pppN(pN)n-1 hybrid + (n-1) diphosphate.. Functionally, RNA polymerase that catalyzes the synthesis of short RNA molecules used as primers for DNA polymerase during DNA replication. In Methanocorpusculum labreanum (strain ATCC 43576 / DSM 4855 / Z), this protein is DNA primase DnaG.